The chain runs to 290 residues: Short chain dehydrogenase andI (290 aa).

Residues Ile-35, Asn-120, Arg-154, Tyr-186, Lys-190, Val-219, and Thr-221 each contribute to the NADP(+) site. Tyr-186 functions as the Proton acceptor in the catalytic mechanism. Residue Lys-190 is the Lowers pKa of active site Tyr of the active site.

It belongs to the short-chain dehydrogenases/reductases (SDR) family.

The protein operates within secondary metabolite biosynthesis; terpenoid biosynthesis. Short chain dehydrogenase; part of the gene cluster that mediates the biosynthesis of anditomin, a fungal meroterpenoid. The first step of the pathway is the synthesis of 3,5-dimethylorsellinic acid (DMOA) by the polyketide synthase andM. DMOA is then converted to the phthalide compound 5,7-dihydroxy-4,6-dimethylphthalide (DHDMP) by the cytochrome P450 monooxygenase andK, which is further prenylated by the prenyltransferase andD to yield farnesyl-DHDMP. Further epoxidation by the FAD-dependent monooxygenase andE leads to epoxyfarnesyl-DHDMP. The next step involves the terpene cyclase andB that converts epoxyfarnesyl-DHDMP into preandiloid A through opening of the epoxide ring followed by the cyclization of the farnesyl moiety. Preandiloid A is in turn oxidized at the C-3 hydroxyl group to yield preandiloid B by the dehydrogenase andC. The dioxygenase andA is solely responsible for the dehydrogenation of preandiloid B leading to the enone preandiloid C, as well as for the intriguing structural rearrangement to generate the bicyclo[2.2.2]octane core, transforming preandiloid C into andiconin. FAD-binding monooxygenase andJ then produces andilesin D which is reduced by dehydrogenase andI to yield andilesin A. Action of acetyltransferase andG followed by a spontaneous acetate elimination leads then to andilesin B, which is in turn substrate of the short chain dehydrogenase andH to yield andilesin C. Finally, the dioxygenase andF catalyzes the transformation of andilesin C to anditomin. The sequence is that of Short chain dehydrogenase andI from Emericella variicolor (Aspergillus stellatus).